The chain runs to 886 residues: uncharacterized protein (886 aa).

The first 20 residues, 1–20 (MKIIKSLILLVLFMASPAKG), serve as a signal peptide directing secretion. 5 helical membrane passes run 520-540 (VTIFGLMFVLGALKLTAVEVV), 609-629 (LLFIQLLQIHNGLAFIVIITI), 647-667 (VIAFIGLTVMISLAPFFIILM), 680-700 (ISILFSYVVQPTILLIFFLLI), and 779-799 (LLFYSYCLMSYGLVSFVTIVV). The segment at 856-886 (EARKPQGGGEHTGKFFQNRNDVKPEQTERND) is disordered. Basic and acidic residues predominate over residues 875–886 (NDVKPEQTERND).

Belongs to the TrbL/VirB6 family.

Its subcellular location is the cell membrane. This is an uncharacterized protein from Rickettsia bellii (strain RML369-C).